Reading from the N-terminus, the 178-residue chain is 3-hydroxyacyl-[acyl-carrier-protein] dehydratase FabZ (178 aa).

Histidine 54 is an active-site residue.

The protein belongs to the thioester dehydratase family. FabZ subfamily.

Its subcellular location is the cytoplasm. The enzyme catalyses a (3R)-hydroxyacyl-[ACP] = a (2E)-enoyl-[ACP] + H2O. Involved in unsaturated fatty acids biosynthesis. Catalyzes the dehydration of short chain beta-hydroxyacyl-ACPs and long chain saturated and unsaturated beta-hydroxyacyl-ACPs. This Yersinia enterocolitica protein is 3-hydroxyacyl-[acyl-carrier-protein] dehydratase FabZ.